Reading from the N-terminus, the 440-residue chain is tRNA (guanine(37)-N(1))-methyltransferase (440 aa).

S-adenosyl-L-methionine-binding positions include H217, 255–256 (DL), 283–284 (DG), and N315.

It belongs to the class I-like SAM-binding methyltransferase superfamily. TRM5/TYW2 family. Monomer.

Its subcellular location is the mitochondrion matrix. It is found in the nucleus. The protein resides in the cytoplasm. The enzyme catalyses guanosine(37) in tRNA + S-adenosyl-L-methionine = N(1)-methylguanosine(37) in tRNA + S-adenosyl-L-homocysteine + H(+). Its function is as follows. Specifically methylates the N1 position of guanosine-37 in various cytoplasmic and mitochondrial tRNAs. Methylation is not dependent on the nature of the nucleoside 5' of the target nucleoside. This is the first step in the biosynthesis of wybutosine (yW), a modified base adjacent to the anticodon of tRNAs and required for accurate decoding. In Drosophila pseudoobscura pseudoobscura (Fruit fly), this protein is tRNA (guanine(37)-N(1))-methyltransferase.